Here is a 460-residue protein sequence, read N- to C-terminus: A-type ATP synthase subunit B (460 aa).

Belongs to the ATPase alpha/beta chains family. In terms of assembly, has multiple subunits with at least A(3), B(3), C, D, E, F, H, I and proteolipid K(x).

It is found in the cell membrane. In terms of biological role, component of the A-type ATP synthase that produces ATP from ADP in the presence of a proton gradient across the membrane. The B chain is a regulatory subunit. The sequence is that of A-type ATP synthase subunit B from Methanosarcina acetivorans (strain ATCC 35395 / DSM 2834 / JCM 12185 / C2A).